The chain runs to 120 residues: Immunoglobulin lambda variable 4-60 (120 aa).

The first 21 residues, 1–21 (MAWTPLLLLFPLLLHCTGSLS), serve as a signal peptide directing secretion. Residues 22 to 46 (QPVLTQSSSASASLGSSVKLTCTLS) are framework-1. Positions 23–120 (PVLTQSSSAS…YYCETWDSNT (98 aa)) constitute an Ig-like domain. A disulfide bridge connects residues Cys43 and Cys113. The complementarity-determining-1 stretch occupies residues 47–53 (SGHSSYI). The framework-2 stretch occupies residues 54-70 (IAWHQQQPGKAPRYLMK). The complementarity-determining-2 stretch occupies residues 71 to 77 (LEGSGSY). Residues 78 to 113 (NKGSGVPDRFSGSSSGADRYLTISNLQFEDEADYYC) form a framework-3 region. A complementarity-determining-3 region spans residues 114-120 (ETWDSNT).

Immunoglobulins are composed of two identical heavy chains and two identical light chains; disulfide-linked.

The protein localises to the secreted. Its subcellular location is the cell membrane. Functionally, v region of the variable domain of immunoglobulin light chains that participates in the antigen recognition. Immunoglobulins, also known as antibodies, are membrane-bound or secreted glycoproteins produced by B lymphocytes. In the recognition phase of humoral immunity, the membrane-bound immunoglobulins serve as receptors which, upon binding of a specific antigen, trigger the clonal expansion and differentiation of B lymphocytes into immunoglobulins-secreting plasma cells. Secreted immunoglobulins mediate the effector phase of humoral immunity, which results in the elimination of bound antigens. The antigen binding site is formed by the variable domain of one heavy chain, together with that of its associated light chain. Thus, each immunoglobulin has two antigen binding sites with remarkable affinity for a particular antigen. The variable domains are assembled by a process called V-(D)-J rearrangement and can then be subjected to somatic hypermutations which, after exposure to antigen and selection, allow affinity maturation for a particular antigen. In Homo sapiens (Human), this protein is Immunoglobulin lambda variable 4-60.